The chain runs to 214 residues: MAEEVPVINPEEWKPRTKVGQLVKEGKITSMKEIFEKNYPITEPEIVDVLLPKLKYEVMDIKIVQKQTDAGEISKYKVLIVMGNMDGYVSYGTGKAKQLRVAIQKAIKNAKMNIIPVRRGCGSWECTCGEAHSLPFKVYGKAGSVEVLLMPAPKGTGLVVGPALKTLLTYAGIKDAWSLTRGSTYTTENFIKAGYNALYNTYKFVTPVDWMRRK.

The region spanning 54 to 117 (LKYEVMDIKI…KNAKMNIIPV (64 aa)) is the S5 DRBM domain.

This sequence belongs to the universal ribosomal protein uS5 family. As to quaternary structure, part of the 30S ribosomal subunit. Contacts protein S4.

Functionally, with S4 and S12 plays an important role in translational accuracy. The polypeptide is Small ribosomal subunit protein uS5 (Sulfurisphaera tokodaii (strain DSM 16993 / JCM 10545 / NBRC 100140 / 7) (Sulfolobus tokodaii)).